Consider the following 500-residue polypeptide: Autophagy-related protein 18 (500 aa).

Residues 3-41 (DSSPTINFINFNQTGTCISLGTSKGFKIFNCEPFGKFYS) form a WD 1 repeat. A disordered region spans residues 174–197 (VGGNTETSFKRDQQDAGHSDISDL). Basic and acidic residues predominate over residues 181–194 (SFKRDQQDAGHSDI). WD repeat units follow at residues 243-283 (AHKG…KIYQ) and 288-327 (TYAT…SNNK). The short motif at 284–288 (FRRGT) is the L/FRRG motif element. The segment at 328–358 (LDSDDSNMEEAAADDSSLDTTSIDALSDEEN) is disordered. Over residues 331–344 (DDSNMEEAAADDSS) the composition is skewed to acidic residues. The residue at position 354 (Ser-354) is a Phosphoserine.

Belongs to the WD repeat PROPPIN family. Component of the PI(3,5)P2 regulatory complex, composed of ATG18, FIG4, FAB1, VAC14 and VAC7. VAC14 nucleates the assembly of the complex and serves as a scaffold. Interacts with ATG2, ATG9 and VAC17. The ATG2-ATG18 complex is essential for autophagosome formation.

It is found in the preautophagosomal structure membrane. The protein resides in the vacuole membrane. It localises to the endosome membrane. The PI(3,5)P2 regulatory complex regulates both the synthesis and turnover of phosphatidylinositol 3,5-bisphosphate (PtdIns(3,5)P2). May negatively regulate FAB1 activity by sequestering or masking VAC7 from FAB1. Necessary for proper vacuole morphology. Plays an important role in osmotically-induced vacuole fragmentation. Required for cytoplasm to vacuole transport (Cvt) vesicle formation, pexophagy and starvation-induced autophagy. Involved in correct ATG9 trafficking to the pre-autophagosomal structure. Might also be involved in premeiotic DNA replication. With ATG2, protects ATG8 from ARG4-mediated cleavage. This chain is Autophagy-related protein 18 (ATG18), found in Saccharomyces cerevisiae (strain YJM789) (Baker's yeast).